The primary structure comprises 1450 residues: Protein clueless (1450 aa).

Disordered regions lie at residues 1 to 126 (MALE…PGSE) and 266 to 287 (KTRP…VSEP). The segment covering 29 to 60 (NNSSAGKKQQQQQQPNQNQNLVNGNGNAADGP) has biased composition (low complexity). The segment covering 62-71 (AKKKGKKNRN) has biased composition (basic residues). A Phosphoserine modification is found at S271. Positions 425-667 (RAEDAFSSKL…RTFPPDVNFL (243 aa)) constitute a Clu domain. 2 stretches are compositionally biased toward basic and acidic residues: residues 725–734 (KQSEKTEEKA) and 743–765 (KESS…EEKQ). Disordered stretches follow at residues 725 to 775 (KQSE…TKTA) and 959 to 1011 (PAVS…SDWT). Basic residues predominate over residues 968-983 (KKRSNGNKHNKHKSKG). The span at 984-1008 (NKQQASGNQNGSSAGSSSGGSSSSS) shows a compositional bias: low complexity. TPR repeat units lie at residues 1102 to 1135 (AYNF…LNNV), 1228 to 1261 (ALID…NIKY), and 1263 to 1296 (GSKA…EKET). Residues 1410–1450 (NNNGDTEAETKDATKDNKDLAGASTQLTNGDKDAETAVASS) form a disordered region. Residues 1417–1428 (AETKDATKDNKD) are compositionally biased toward basic and acidic residues.

It belongs to the CLU family.

The protein localises to the cytoplasm. MRNA-binding protein involved in proper cytoplasmic distribution of mitochondria. The protein is Protein clueless of Drosophila ananassae (Fruit fly).